The primary structure comprises 704 residues: SH3KBP1-binding protein 1 (704 aa).

The residue at position 2 (alanine 2) is an N-acetylalanine. Residues 19 to 88 (EVIHLNVGGK…LRTKELDPRG (70 aa)) form the BTB domain. Residues 146 to 165 (VGPQQIGGRPAPVRRSNTMP) form a disordered region. Threonine 163 is modified (phosphothreonine). 5 WD repeats span residues 233–280 (RLDW…GGSE), 283–322 (VFHL…WQVQ), 324–359 (VQPI…LRMK), 428–466 (VHRS…GMIS), and 548–586 (LECE…DGLG). The segment at 609-704 (PLTSSRASFP…PKNTLNETSF (96 aa)) is disordered. Residues 611–631 (TSSRASFPSPSPRTSLTSLHS) show a composition bias toward low complexity. The short motif at 618–623 (PSPSPR) is the PXXXPR element. Residues serine 644 and serine 646 each carry the phosphoserine modification. Residues 678 to 683 (PTPAPR) carry the PXXXPR motif.

The protein belongs to the KCTD3 family. Monomer. Interacts with CUL3; interaction is direct and forms a 5:5 heterodecamer. Interacts (via PXXXPR motifs) with SH3KBP1 (via SH3 domains). Directly interacts with cathepsin B/CTSB.

Its subcellular location is the lysosome. Functionally, inhibits CBL-SH3KBP1 complex mediated down-regulation of EGFR signaling by sequestration of SH3KBP1. Binds to SH3KBP1 and prevents its interaction with CBL and inhibits translocation of SH3KBP1 to EGFR containing vesicles upon EGF stimulation. This chain is SH3KBP1-binding protein 1 (Shkbp1), found in Rattus norvegicus (Rat).